The primary structure comprises 428 residues: Glutamate-1-semialdehyde 2,1-aminomutase 1 (428 aa).

Lys-268 bears the N6-(pyridoxal phosphate)lysine mark.

It belongs to the class-III pyridoxal-phosphate-dependent aminotransferase family. HemL subfamily. As to quaternary structure, homodimer. Pyridoxal 5'-phosphate serves as cofactor.

The protein localises to the cytoplasm. The enzyme catalyses (S)-4-amino-5-oxopentanoate = 5-aminolevulinate. It participates in porphyrin-containing compound metabolism; protoporphyrin-IX biosynthesis; 5-aminolevulinate from L-glutamyl-tRNA(Glu): step 2/2. The protein is Glutamate-1-semialdehyde 2,1-aminomutase 1 of Geobacillus kaustophilus (strain HTA426).